The primary structure comprises 474 residues: L-arabinose isomerase (474 aa).

Mn(2+) is bound by residues glutamate 306, glutamate 331, histidine 348, and histidine 447.

It belongs to the arabinose isomerase family. It depends on Mn(2+) as a cofactor.

The enzyme catalyses beta-L-arabinopyranose = L-ribulose. It functions in the pathway carbohydrate degradation; L-arabinose degradation via L-ribulose; D-xylulose 5-phosphate from L-arabinose (bacterial route): step 1/3. Catalyzes the conversion of L-arabinose to L-ribulose. The polypeptide is L-arabinose isomerase (Lactiplantibacillus plantarum (strain ATCC BAA-793 / NCIMB 8826 / WCFS1) (Lactobacillus plantarum)).